Consider the following 319-residue polypeptide: Nuclear hormone receptor family member nhr-174 (319 aa).

A DNA-binding region (nuclear receptor) is located at residues 7–81; it reads DPVCPVCEFP…AGMKRNLVRQ (75 aa). NR C4-type zinc fingers lie at residues 10-31 and 47-63; these read CPVC…CGAC and CEKK…CRAC. Positions 130–319 constitute an NR LBD domain; sequence EAEKDVSKIL…SMKKSRYLQF (190 aa).

It belongs to the nuclear hormone receptor family.

It localises to the nucleus. Functionally, orphan nuclear receptor. The chain is Nuclear hormone receptor family member nhr-174 (nhr-174) from Caenorhabditis elegans.